The primary structure comprises 168 residues: Disulfide bond formation protein B 1 (168 aa).

Residues 1-14 are Cytoplasmic-facing; sequence MNELTSRLNRERRF. The chain crosses the membrane as a helical span at residues 15–31; sequence LVLLGVICLALIGGALY. Topologically, residues 32-49 are periplasmic; the sequence is MQVVLGEAPCPLCILQRY. Cys41 and Cys44 are disulfide-bonded. The helical transmembrane segment at 50 to 65 threads the bilayer; the sequence is ALLFIAIFAFIAAAMP. The Cytoplasmic portion of the chain corresponds to 66-72; the sequence is GRKSLTF. A helical membrane pass occupies residues 73 to 89; it reads FEVLVVLSAIGGIVAAG. Topologically, residues 90-144 are periplasmic; sequence NHVYILANPMVSCGIDTLQPIVDDLPLAKLWPLAFQVDGFCSTPYPPILGLSLAQ. Cysteines 102 and 130 form a disulfide. Residues 145 to 163 form a helical membrane-spanning segment; it reads WALVAFVLTTVLVPLGIYR. Residues 164–168 lie on the Cytoplasmic side of the membrane; it reads NRRRG.

This sequence belongs to the DsbB family.

It localises to the cell inner membrane. Required for disulfide bond formation in some periplasmic proteins. Acts by oxidizing the DsbA protein. In Pseudomonas entomophila (strain L48), this protein is Disulfide bond formation protein B 1.